Consider the following 964-residue polypeptide: SKI family transcriptional corepressor 1 (964 aa).

Disordered regions lie at residues 45 to 72 (TQLG…SSAL), 278 to 365 (RTFS…GGSA), 414 to 461 (AGEP…WGHQ), 525 to 587 (AGGG…RKSS), 610 to 768 (REAY…GAAK), and 794 to 842 (LCTP…EDGL). The segment covering 283–310 (QGGGGGGANSGSGGAGKGGAGGGGGPGC) has biased composition (gly residues). Residues 345–355 (ALGLAAAASGP) show a composition bias toward low complexity. 2 stretches are compositionally biased toward gly residues: residues 356–365 (AGPGGPGGSA) and 417–440 (PKGG…GPGA). Residues 571 to 583 (SLGPLPPPPPPPA) are compositionally biased toward pro residues. Positions 652 to 661 (DTADEPEVDV) are enriched in acidic residues. Basic and acidic residues predominate over residues 798–808 (ETHEPDKEDNH). A compositionally biased stretch (polar residues) spans 823–834 (DQRSVSQPSPAN). A coiled-coil region spans residues 853–921 (EKDIENLARE…DTLCNELDQE (69 aa)).

Belongs to the SKI family. Interacts with SMAD1, SMAD2 and SMAD3. Interacts with LBX1. Expressed in brain with higher levels in embryo than adult. Expressed by migratory precursors of Purkinje cells in the postnatal brain. Also expressed in adult testis.

Its subcellular location is the nucleus. Functionally, inhibits BMP signaling. Acts as a transcriptional corepressor of LBX1. The sequence is that of SKI family transcriptional corepressor 1 (Skor1) from Mus musculus (Mouse).